The primary structure comprises 282 residues: MSNKIISLGSIEIANDKPFVLFGGMNVLESRDLAMQIAETYAEVTQKLGIPYVFKASFDKANRSSVNSYRGPGMEEGLKIFEEIKSTFNLPLITDVHEVQQCAPVAEVVDVIQLPAFLARQTDLVVAMAKTGAIINVKKPQFLAPHEMRHIITKFNEAGNDEIMLCERGSSFGYNNLVVDMLGMDEMKQTGYPVIFDATHALQRPGGRSDSAGGRRAQATELARSGMALGLAGLFIEAHPDPDNAKCDGPCALPLHQLENYLTQMKAVDDLVKSFEPIDTSK.

The protein belongs to the KdsA family.

It localises to the cytoplasm. The catalysed reaction is D-arabinose 5-phosphate + phosphoenolpyruvate + H2O = 3-deoxy-alpha-D-manno-2-octulosonate-8-phosphate + phosphate. Its pathway is carbohydrate biosynthesis; 3-deoxy-D-manno-octulosonate biosynthesis; 3-deoxy-D-manno-octulosonate from D-ribulose 5-phosphate: step 2/3. The protein operates within bacterial outer membrane biogenesis; lipopolysaccharide biosynthesis. The protein is 2-dehydro-3-deoxyphosphooctonate aldolase of Shewanella halifaxensis (strain HAW-EB4).